Reading from the N-terminus, the 594-residue chain is Potassium-transporting ATPase potassium-binding subunit (594 aa).

Transmembrane regions (helical) follow at residues 3-23, 67-87, 136-156, 179-199, 287-307, 314-334, 415-435, 453-473, 519-539, and 562-582; these read ADFL…APLL, AVAM…LQRL, ALTV…IALV, LYVL…QGVV, LEML…GEMV, VAIL…AAYF, GLYG…LMIG, VALV…VAVL, VLLG…ILAL, and LFVA…YVPA.

The protein belongs to the KdpA family. In terms of assembly, the system is composed of three essential subunits: KdpA, KdpB and KdpC.

It localises to the cell inner membrane. Functionally, part of the high-affinity ATP-driven potassium transport (or Kdp) system, which catalyzes the hydrolysis of ATP coupled with the electrogenic transport of potassium into the cytoplasm. This subunit binds the periplasmic potassium ions and delivers the ions to the membrane domain of KdpB through an intramembrane tunnel. The protein is Potassium-transporting ATPase potassium-binding subunit of Bordetella parapertussis (strain 12822 / ATCC BAA-587 / NCTC 13253).